A 60-amino-acid chain; its full sequence is MARLKVTQVRSEIGTKQNQRDSLRSLGLKRINDVVVKEDRPEIRGMIFTVNHLVKVEEVE.

The protein belongs to the universal ribosomal protein uL30 family. Part of the 50S ribosomal subunit.

This chain is Large ribosomal subunit protein uL30, found in Salinispora tropica (strain ATCC BAA-916 / DSM 44818 / JCM 13857 / NBRC 105044 / CNB-440).